Reading from the N-terminus, the 467-residue chain is UDP-N-acetylmuramate--L-alanine ligase (467 aa).

An ATP-binding site is contributed by 114 to 120; sequence GTHGKTT.

Belongs to the MurCDEF family.

It is found in the cytoplasm. The catalysed reaction is UDP-N-acetyl-alpha-D-muramate + L-alanine + ATP = UDP-N-acetyl-alpha-D-muramoyl-L-alanine + ADP + phosphate + H(+). Its pathway is cell wall biogenesis; peptidoglycan biosynthesis. Functionally, cell wall formation. This Rhodopseudomonas palustris (strain BisB18) protein is UDP-N-acetylmuramate--L-alanine ligase.